Here is a 142-residue protein sequence, read N- to C-terminus: uncharacterized protein (142 aa).

Residues Met-1–Ile-31 are disordered. Residues Val-11 to Ile-29 show a composition bias toward acidic residues.

This is an uncharacterized protein from Acidianus sp. F28 (AFV-2).